The primary structure comprises 248 residues: PF03932 family protein CutC (248 aa).

The protein belongs to the CutC family. As to quaternary structure, homodimer.

It localises to the cytoplasm. In Escherichia coli O139:H28 (strain E24377A / ETEC), this protein is PF03932 family protein CutC.